A 247-amino-acid chain; its full sequence is ATP synthase subunit a, chloroplastic (247 aa).

A run of 5 helical transmembrane segments spans residues 38 to 58 (QVLI…TIAV), 95 to 115 (VPFI…GALF), 134 to 154 (INTT…AGLT), 199 to 219 (LVVV…VMFL), and 220 to 240 (GLFT…AYIG).

The protein belongs to the ATPase A chain family. F-type ATPases have 2 components, CF(1) - the catalytic core - and CF(0) - the membrane proton channel. CF(1) has five subunits: alpha(3), beta(3), gamma(1), delta(1), epsilon(1). CF(0) has four main subunits: a, b, b' and c.

The protein localises to the plastid. Its subcellular location is the chloroplast thylakoid membrane. In terms of biological role, key component of the proton channel; it plays a direct role in the translocation of protons across the membrane. This is ATP synthase subunit a, chloroplastic from Piper cenocladum (Ant piper).